The following is a 687-amino-acid chain: MSVRYPLLNRELGILGFNERVLAQAADPQVPLLERLRFICITSSNLDEFFEVRMAGLQEQIRDNPGALTPDGMSLQHAYDLVVERAQRLVHRQYTMLHETVLPALEQEGIYFHAADTWNDEQLEWARRYFLDELLPVLTPIGLDPAHPFPRVLNKSLNFVVELEGRDAFGRQAVMGIVQAPRALPRVVRMPQALSGFEHGFVLLSTFMQRFVGELFPQLVVKSCNQFRITRNSELFVDEDEITNLRVALQGELPARHLGNAVRLEVSADTPAHIVRRLLEESLLDEKDCYRVAGSVNLVRLMQIPDLVDRPDLKFAPFTASIPPVIANAPAMFDAIDDGDILLHHPYESFQPVLELLQQAAKDPSVVAIKQTIYRTGTDSPLMDALMAAARNGKEVTVVVELLARFDEETNINWASQLEAVGAHVVYGVVGHKCHAKMMLIVRRVVESGKATLRRYVHLGTGNYHPRTARLYTDFGLMTADQKICEDVHHVFQQLTGIGGELTLHELWQSPFTLHPRIIESIRAEIDNARAGKRARVVAKMNALLEPTVIAALYEASQAGVKVDLIVRGVCALKPGVPGLSENITVRSIVGRFLEHHRIYYFHADGAEEVYLSSADWMDRNLFRRVEVAFPIRERKLKRRVIAEGLSVCLGDNQSAWLMQSDGHYRRRRAGKTLRNAQLGLLAKFCS.

Position 45 (asparagine 45) interacts with ATP. Positions 375 and 405 each coordinate Mg(2+). Residue histidine 435 is the Phosphohistidine intermediate of the active site. ATP contacts are provided by tyrosine 472, arginine 568, and histidine 596.

It belongs to the polyphosphate kinase 1 (PPK1) family. Mg(2+) serves as cofactor. An intermediate of this reaction is the autophosphorylated ppk in which a phosphate is covalently linked to a histidine residue through a N-P bond.

It catalyses the reaction [phosphate](n) + ATP = [phosphate](n+1) + ADP. Catalyzes the reversible transfer of the terminal phosphate of ATP to form a long-chain polyphosphate (polyP). The chain is Polyphosphate kinase from Burkholderia ambifaria (strain MC40-6).